We begin with the raw amino-acid sequence, 534 residues long: Peptide chain release factor 3 (534 aa).

Positions 9 to 278 constitute a tr-type G domain; sequence SRRRTFAIIS…FFVEHAPPPQ (270 aa). GTP contacts are provided by residues 18–25, 86–90, and 140–143; these read SHPDAGKT, DTPGH, and NKLD.

The protein belongs to the TRAFAC class translation factor GTPase superfamily. Classic translation factor GTPase family. PrfC subfamily.

It localises to the cytoplasm. Its function is as follows. Increases the formation of ribosomal termination complexes and stimulates activities of RF-1 and RF-2. It binds guanine nucleotides and has strong preference for UGA stop codons. It may interact directly with the ribosome. The stimulation of RF-1 and RF-2 is significantly reduced by GTP and GDP, but not by GMP. This is Peptide chain release factor 3 from Stenotrophomonas maltophilia (strain R551-3).